The chain runs to 356 residues: Methylthioribose-1-phosphate isomerase (356 aa).

Residues 53–55 (RGA), arginine 97, and glutamine 203 each bind substrate. Aspartate 244 acts as the Proton donor in catalysis. Residue 254–255 (NK) participates in substrate binding.

It belongs to the eIF-2B alpha/beta/delta subunits family. MtnA subfamily.

It carries out the reaction 5-(methylsulfanyl)-alpha-D-ribose 1-phosphate = 5-(methylsulfanyl)-D-ribulose 1-phosphate. Its pathway is amino-acid biosynthesis; L-methionine biosynthesis via salvage pathway; L-methionine from S-methyl-5-thio-alpha-D-ribose 1-phosphate: step 1/6. Functionally, catalyzes the interconversion of methylthioribose-1-phosphate (MTR-1-P) into methylthioribulose-1-phosphate (MTRu-1-P). This chain is Methylthioribose-1-phosphate isomerase, found in Rhodopirellula baltica (strain DSM 10527 / NCIMB 13988 / SH1).